The following is a 163-amino-acid chain: Cyanate hydratase (163 aa).

Active-site residues include R103, E106, and S129.

This sequence belongs to the cyanase family.

The enzyme catalyses cyanate + hydrogencarbonate + 3 H(+) = NH4(+) + 2 CO2. Its function is as follows. Catalyzes the reaction of cyanate with bicarbonate to produce ammonia and carbon dioxide. The chain is Cyanate hydratase from Talaromyces stipitatus (strain ATCC 10500 / CBS 375.48 / QM 6759 / NRRL 1006) (Penicillium stipitatum).